The chain runs to 301 residues: GTPase Era (301 aa).

Positions 7–175 (YCGFIAIVGR…AAIVRKHLPE (169 aa)) constitute an Era-type G domain. Positions 15–22 (GRPNVGKS) are G1. 15–22 (GRPNVGKS) contacts GTP. The interval 41-45 (QTTRH) is G2. The segment at 62-65 (DTPG) is G3. Residues 62–66 (DTPGL) and 124–127 (NKVD) each bind GTP. Positions 124–127 (NKVD) are G4. The G5 stretch occupies residues 154–156 (ISA). The KH type-2 domain occupies 206–283 (LGAELPYSVT…HLELWVKVKS (78 aa)).

Belongs to the TRAFAC class TrmE-Era-EngA-EngB-Septin-like GTPase superfamily. Era GTPase family. As to quaternary structure, monomer.

The protein localises to the cytoplasm. The protein resides in the cell inner membrane. An essential GTPase that binds both GDP and GTP, with rapid nucleotide exchange. Plays a role in 16S rRNA processing and 30S ribosomal subunit biogenesis and possibly also in cell cycle regulation and energy metabolism. In Shigella flexneri serotype 5b (strain 8401), this protein is GTPase Era.